The following is a 173-amino-acid chain: Ribulose bisphosphate carboxylase small subunit, chloroplastic 5 (173 aa).

Residues 1–49 (MASIPATVATVAQANMVAPFTGLKSNAAFPVTKKVNDFSTLPSNGGRVQ) constitute a chloroplast transit peptide.

Belongs to the RuBisCO small chain family. In terms of assembly, heterohexadecamer of 8 large and 8 small subunits.

The protein localises to the plastid. It is found in the chloroplast. Functionally, ruBisCO catalyzes two reactions: the carboxylation of D-ribulose 1,5-bisphosphate, the primary event in carbon dioxide fixation, as well as the oxidative fragmentation of the pentose substrate. Both reactions occur simultaneously and in competition at the same active site. Although the small subunit is not catalytic it is essential for maximal activity. The sequence is that of Ribulose bisphosphate carboxylase small subunit, chloroplastic 5 from Flaveria pringlei.